The chain runs to 163 residues: Keratin-associated protein 11-1 (163 aa).

Repeat copies occupy residues 111-120, 121-130, 131-140, and 141-150. A 4 X 10 AA approximate repeats region spans residues 111–150; it reads CQPLGGISSVCQPVGGISTVCQPVGGVSTVCQPACGVSRT.

This sequence belongs to the PMG family. Expressed in the upper matrix and in the entire hair cortex.

In terms of biological role, in the hair cortex, hair keratin intermediate filaments are embedded in an interfilamentous matrix, consisting of hair keratin-associated proteins (KRTAP), which are essential for the formation of a rigid and resistant hair shaft through their extensive disulfide bond cross-linking with abundant cysteine residues of hair keratins. The matrix proteins include the high-sulfur and high-glycine-tyrosine keratins. This chain is Keratin-associated protein 11-1 (KRTAP11-1), found in Homo sapiens (Human).